Consider the following 931-residue polypeptide: Neuropilin-2 (931 aa).

The first 20 residues, 1–20 (MDMFPLTWVFLALYFSGHEV), serve as a signal peptide directing secretion. At 21–864 (RSQQDPPCGG…EKSWLYTLDP (844 aa)) the chain is on the extracellular side. 3 disulfides stabilise this stretch: cysteine 28–cysteine 55, cysteine 83–cysteine 105, and cysteine 149–cysteine 175. 2 consecutive CUB domains span residues 28–142 (CGGR…YEIF) and 149–267 (CSKN…YYLI). N-linked (GlcNAc...) asparagine glycosylation is found at asparagine 152 and asparagine 157. The Ca(2+) site is built by glutamate 197, aspartate 211, and aspartate 252. Residues cysteine 208 and cysteine 230 are joined by a disulfide bond. Disulfide bonds link cysteine 277–cysteine 427 and cysteine 434–cysteine 592. F5/8 type C domains lie at 277 to 427 (CNVP…LFGC) and 434 to 592 (CSNM…VLGC). A compositionally biased stretch (polar residues) spans 298-310 (TFSDGRWTPQQSR). The tract at residues 298-317 (TFSDGRWTPQQSRLHGDDNG) is disordered. The disordered stretch occupies residues 601-621 (VETLGPTVKSEETTTPYPMDE). An N-linked (GlcNAc...) asparagine glycan is attached at asparagine 629. The region spanning 642–802 (SGFNCNFDFP…TDVPLENCME (161 aa)) is the MAM domain. The interval 819–854 (THGGEGYEDEIDDEYEGDWSNSSSSTSGAGDPSSGK) is disordered. Residues 824–835 (GYEDEIDDEYEG) show a composition bias toward acidic residues. The segment covering 836–851 (DWSNSSSSTSGAGDPS) has biased composition (low complexity). Asparagine 839 is a glycosylation site (N-linked (GlcNAc...) asparagine). A helical membrane pass occupies residues 865 to 889 (ILITIIAMSSLGVLLGATCAGLLLY). At 890–931 (CTCSYSGLSSRSCTTLENYNFELYDGLKHKVKINHQKCCSEA) the chain is on the cytoplasmic side.

Belongs to the neuropilin family. Heterodimer with NRP1. Binds PLXNB1. In terms of tissue distribution, expressed in developing CNS, PNS and in some nonneural tissues including limb buds, developing bones, muscles, intestinal epithelium, kidney, lung and submandibular gland.

The protein localises to the membrane. Its function is as follows. High affinity receptor for semaphorins 3C, 3F, VEGF-165 and VEGF-145 isoforms of VEGF, and the PLGF-2 isoform of PGF. This Mus musculus (Mouse) protein is Neuropilin-2 (Nrp2).